The following is a 233-amino-acid chain: Large ribosomal subunit protein bL25 (233 aa).

The tract at residues 1 to 23 (MATVRELKATARPKSGKGAARAE) is disordered.

The protein belongs to the bacterial ribosomal protein bL25 family. CTC subfamily. In terms of assembly, part of the 50S ribosomal subunit; part of the 5S rRNA/L5/L18/L25 subcomplex. Contacts the 5S rRNA. Binds to the 5S rRNA independently of L5 and L18.

Its function is as follows. This is one of the proteins that binds to the 5S RNA in the ribosome where it forms part of the central protuberance. The protein is Large ribosomal subunit protein bL25 of Nitrobacter hamburgensis (strain DSM 10229 / NCIMB 13809 / X14).